Here is a 188-residue protein sequence, read N- to C-terminus: Transcription factor FapR (188 aa).

It belongs to the FapR family.

Transcriptional factor involved in regulation of membrane lipid biosynthesis by repressing genes involved in fatty acid and phospholipid metabolism. This chain is Transcription factor FapR, found in Bacillus velezensis (strain DSM 23117 / BGSC 10A6 / LMG 26770 / FZB42) (Bacillus amyloliquefaciens subsp. plantarum).